A 315-amino-acid chain; its full sequence is Alpha- and gamma-adaptin-binding protein p34 (315 aa).

The interval 197 to 233 is disordered; it reads IGSADPCHPEQPHLPAADRTESLSDHRGGASNTTDAQ. Positions 203–224 are enriched in basic and acidic residues; sequence CHPEQPHLPAADRTESLSDHRG. A phosphoserine mark is found at serine 310 and serine 311.

As to quaternary structure, associated with AP-1 and AP-2 complexes.

Its subcellular location is the cytoplasm. It localises to the cytosol. May be involved in endocytic recycling of growth factor receptors such as EGFR. The polypeptide is Alpha- and gamma-adaptin-binding protein p34 (AAGAB) (Pongo abelii (Sumatran orangutan)).